A 171-amino-acid chain; its full sequence is Cytochrome c oxidase subunit 5, mitochondrial (171 aa).

The N-terminal 27 residues, 1 to 27, are a transit peptide targeting the mitochondrion; the sequence is MLRTPTVSALVRNVAVRAAKPTMAVRA. Residues 28-100 lie on the Mitochondrial matrix side of the membrane; sequence ASTMPISNPT…ALPPPGEQKK (73 aa). Residues 101–123 traverse the membrane as a helical segment; it reads VLAYTVAGVFLSFVIFATMRAFA. The Mitochondrial intermembrane portion of the chain corresponds to 124–171; sequence KPPPATMTKEWQEATNEFLKAQKSDPLTGLTSEGYNGKGHVQSPSASA. The segment at 145–171 is disordered; sequence QKSDPLTGLTSEGYNGKGHVQSPSASA.

This sequence belongs to the cytochrome c oxidase IV family. Component of the cytochrome c oxidase (complex IV, CIV), a multisubunit enzyme composed of 11 subunits. The complex is composed of a catalytic core of 3 subunits Cox1, Cox2 and Cox3, encoded in the mitochondrial DNA, and 8 supernumerary subunits Cox4, Cox5a/Cox5, Cox6, Cox7, Cox8, Cox7a/Cox9, Cox6b/Cox12 and Cox6a/Cox13, which are encoded in the nuclear genome. The complex exists as a monomer or a dimer and forms respiratory supercomplexes (SCs) in the inner mitochondrial membrane with NADH-ubiquinone oxidoreductase (complex I, CI) and ubiquinol-cytochrome c oxidoreductase (cytochrome b-c1 complex, complex III, CIII), resulting in various different assemblies (supercomplexes I(1)IV(1), I(1)III(3)IV(2), III(2)IV(1) and III(2)IV(2) as well as larger supercomplexes of compositions like I(1)III(2)IV(5-6)).

It is found in the mitochondrion inner membrane. Its pathway is energy metabolism; oxidative phosphorylation. Functionally, component of the cytochrome c oxidase, the last enzyme in the mitochondrial electron transport chain which drives oxidative phosphorylation. The respiratory chain contains 3 multisubunit complexes succinate dehydrogenase (complex II, CII), ubiquinol-cytochrome c oxidoreductase (cytochrome b-c1 complex, complex III, CIII) and cytochrome c oxidase (complex IV, CIV), that cooperate to transfer electrons derived from NADH and succinate to molecular oxygen, creating an electrochemical gradient over the inner membrane that drives transmembrane transport and the ATP synthase. Cytochrome c oxidase is the component of the respiratory chain that catalyzes the reduction of oxygen to water. Electrons originating from reduced cytochrome c in the intermembrane space (IMS) are transferred via the dinuclear copper A center (CU(A)) of Cox2 and heme A of Cox1 to the active site in Cox1, a binuclear center (BNC) formed by heme A3 and copper B (CU(B)). The BNC reduces molecular oxygen to 2 water molecules using 4 electrons from cytochrome c in the IMS and 4 protons from the mitochondrial matrix. The protein is Cytochrome c oxidase subunit 5, mitochondrial (cya-4) of Neurospora crassa (strain ATCC 24698 / 74-OR23-1A / CBS 708.71 / DSM 1257 / FGSC 987).